The primary structure comprises 142 residues: Transcriptional regulator MraZ (142 aa).

SpoVT-AbrB domains are found at residues 5–47 (NYQH…TNQE) and 76–119 (SLTV…DINA).

Belongs to the MraZ family. In terms of assembly, forms oligomers.

The protein localises to the cytoplasm. The protein resides in the nucleoid. In Mycoplasmoides gallisepticum (strain R(low / passage 15 / clone 2)) (Mycoplasma gallisepticum), this protein is Transcriptional regulator MraZ.